The chain runs to 206 residues: LexA repressor (206 aa).

Positions 28–48 (RAEIATRLGFKSANAAEEHLK) form a DNA-binding region, H-T-H motif. Residues serine 123 and lysine 160 each act as for autocatalytic cleavage activity in the active site.

It belongs to the peptidase S24 family. Homodimer.

The catalysed reaction is Hydrolysis of Ala-|-Gly bond in repressor LexA.. Its function is as follows. Represses a number of genes involved in the response to DNA damage (SOS response), including recA and lexA. In the presence of single-stranded DNA, RecA interacts with LexA causing an autocatalytic cleavage which disrupts the DNA-binding part of LexA, leading to derepression of the SOS regulon and eventually DNA repair. The protein is LexA repressor of Shewanella sp. (strain ANA-3).